We begin with the raw amino-acid sequence, 514 residues long: Cytochrome P450 71AP13 (514 aa).

Residues 20 to 37 (HSSLFAFSLLILLLKFIY) form a helical membrane-spanning segment. Asparagine 127 and asparagine 184 each carry an N-linked (GlcNAc...) asparagine glycan. Cysteine 455 contributes to the heme binding site.

This sequence belongs to the cytochrome P450 family. Requires heme as cofactor. In terms of tissue distribution, expressed in fruit kernel, seedlings, leaves and stems.

The protein resides in the membrane. The sequence is that of Cytochrome P450 71AP13 from Prunus mume (Japanese apricot).